The chain runs to 569 residues: Putative potassium-transporting ATPase ATP-binding subunit (569 aa).

Transmembrane regions (helical) follow at residues 34-54 (PVMF…LAMV) and 58-78 (IAGS…TVLF). The active-site 4-aspartylphosphate intermediate is Asp-194. ATP contacts are provided by residues Asp-231, Glu-235, 264 to 271 (FTAQSRMS), and Lys-282. Asp-405 and Asp-409 together coordinate Mg(2+). 3 helical membrane-spanning segments follow: residues 475 to 495 (FAII…LNVM), 503 to 523 (AILS…PLAL), and 543 to 563 (IYGL…DVLL).

The protein belongs to the cation transport ATPase (P-type) (TC 3.A.3) family. Type IA subfamily. As to quaternary structure, the system is composed of three essential subunits: KdpA, KdpB and KdpC.

It is found in the cell inner membrane. It carries out the reaction K(+)(out) + ATP + H2O = K(+)(in) + ADP + phosphate + H(+). Functionally, part of the high-affinity ATP-driven potassium transport (or Kdp) system, which catalyzes the hydrolysis of ATP coupled with the electrogenic transport of potassium into the cytoplasm. This subunit is responsible for energy coupling to the transport system and for the release of the potassium ions to the cytoplasm. This is Putative potassium-transporting ATPase ATP-binding subunit from Salmonella typhi.